Here is a 291-residue protein sequence, read N- to C-terminus: Protein US2 (291 aa).

Glycine 2 carries the N-acetylglycine; by host modification. The interval 223 to 281 (NKPRPASSRPHPATHPTQRPCFTCMGRPEIPDEPSWQTGDDDPQNPGPPLAVGDEWPPS) is disordered.

The protein belongs to the herpesviridae HHV-1 US2 protein family. In terms of assembly, interacts with host KRT18. Interacts with host MAP3K7; this interaction induces host NF-kappa-B pathway.

The protein resides in the virion. It localises to the host cytoplasm. Its subcellular location is the host cell surface. The protein localises to the host nucleus. Plays a role in the activation of the host NF-kappa-B pathway by interacting with and thus activating the component MAP3K7. The polypeptide is Protein US2 (Human herpesvirus 2 (strain HG52) (HHV-2)).